Reading from the N-terminus, the 642-residue chain is Palmitoyltransferase akr1 (642 aa).

ANK repeat units lie at residues M1 to A29, G33 to A62, L67 to L96, Q100 to L129, Q133 to A162, and D166 to A196. Residues M1–F256 are Cytoplasmic-facing. A run of 2 helical transmembrane segments spans residues I257–I277 and C278–I298. The Cytoplasmic segment spans residues T299 to P316. A helical transmembrane segment spans residues F317 to I337. The Lumenal portion of the chain corresponds to V338 to P343. The helical transmembrane segment at I344 to V364 threads the bilayer. Residues R365 to T444 lie on the Cytoplasmic side of the membrane. The DHHC domain occupies H400–F450. The S-palmitoyl cysteine intermediate role is filled by C430. A helical transmembrane segment spans residues F445–Y465. Residues Y466–M496 lie on the Lumenal side of the membrane. The helical transmembrane segment at F497 to F517 threads the bilayer. At T518 to V642 the chain is on the cytoplasmic side.

It belongs to the DHHC palmitoyltransferase family. AKR/ZDHHC17 subfamily.

The protein resides in the early endosome membrane. It is found in the golgi apparatus membrane. The catalysed reaction is L-cysteinyl-[protein] + hexadecanoyl-CoA = S-hexadecanoyl-L-cysteinyl-[protein] + CoA. In terms of biological role, palmitoyltransferase specific for casein kinase 1. This chain is Palmitoyltransferase akr1 (akr1), found in Schizosaccharomyces pombe (strain 972 / ATCC 24843) (Fission yeast).